A 931-amino-acid chain; its full sequence is Probable UDP-N-acetylglucosamine--peptide N-acetylglucosaminyltransferase SPINDLY (931 aa).

Basic and acidic residues predominate over residues 1–15 (MAWTEKDVENGKESE). The tract at residues 1–38 (MAWTEKDVENGKESESLGNNGFLKGGQSSSGSKGSPGR) is disordered. The segment covering 25 to 37 (GGQSSSGSKGSPG) has biased composition (low complexity). 11 TPR repeats span residues 48–81 (DKDA…DSKS), 82–115 (IESL…DPQN), 116–149 (ACAL…DPSY), 157–190 (AIVL…DSHY), 191–224 (APAY…RPMY), 225–258 (AEAY…SPNF), 266–299 (AIAL…NWHY), 300–333 (ADAM…NPHC), 334–367 (AEAC…KPNF), 369–401 (QSLN…NPTY), and 402–435 (AEAY…DPDS). Positions 436-931 (RNAGQNRLLA…NHNGNHGNLS (496 aa)) are catalytic region. A compositionally biased stretch (low complexity) spans 864-884 (QQQQTQTESVVPEESSVNPSE). The disordered stretch occupies residues 864 to 931 (QQQQTQTESV…NHNGNHGNLS (68 aa)). Residues 910-931 (KSSTSEENGVQSNHNGNHGNLS) are compositionally biased toward polar residues.

The protein belongs to the glycosyltransferase 41 family. O-GlcNAc transferase subfamily.

It is found in the nucleus. It carries out the reaction L-seryl-[protein] + UDP-N-acetyl-alpha-D-glucosamine = 3-O-(N-acetyl-beta-D-glucosaminyl)-L-seryl-[protein] + UDP + H(+). It catalyses the reaction L-threonyl-[protein] + UDP-N-acetyl-alpha-D-glucosamine = 3-O-(N-acetyl-beta-D-glucosaminyl)-L-threonyl-[protein] + UDP + H(+). It participates in protein modification; protein glycosylation. Functionally, probable O-linked N-acetylglucosamine transferase (OGT) involved in various processes such as gibberellin (GA) signaling pathway. OGTs catalyze the addition of nucleotide-activated sugars directly onto the polypeptide through O-glycosidic linkage with the hydroxyl of serine or threonine. Probably acts by adding O-linked sugars to yet unknown proteins. This Solanum lycopersicum (Tomato) protein is Probable UDP-N-acetylglucosamine--peptide N-acetylglucosaminyltransferase SPINDLY (SPY).